We begin with the raw amino-acid sequence, 356 residues long: DNA polymerase IV (356 aa).

The region spanning 1–188 (MDTSRKIIHI…IPVTKFYGVG (188 aa)) is the UmuC domain. The Mg(2+) site is built by aspartate 11 and aspartate 106. Residue glutamate 107 is part of the active site.

This sequence belongs to the DNA polymerase type-Y family. As to quaternary structure, monomer. It depends on Mg(2+) as a cofactor.

It is found in the cytoplasm. It catalyses the reaction DNA(n) + a 2'-deoxyribonucleoside 5'-triphosphate = DNA(n+1) + diphosphate. Functionally, poorly processive, error-prone DNA polymerase involved in untargeted mutagenesis. Copies undamaged DNA at stalled replication forks, which arise in vivo from mismatched or misaligned primer ends. These misaligned primers can be extended by PolIV. Exhibits no 3'-5' exonuclease (proofreading) activity. May be involved in translesional synthesis, in conjunction with the beta clamp from PolIII. In Listeria monocytogenes serovar 1/2a (strain ATCC BAA-679 / EGD-e), this protein is DNA polymerase IV.